A 1563-amino-acid chain; its full sequence is Galactose-specific cell agglutination protein gsf2 (1563 aa).

A signal peptide spans 1–27; it reads MSVRRFLSTSARALLFTAALLPSLTSG. Tandem repeats lie at residues 203-280, 281-358, 359-436, 437-514, 515-592, 593-670, 671-750, 751-825, 826-869, 870-913, 914-957, 958-1001, 1002-1045, 1046-1089, 1090-1133, 1134-1140, 1141-1162, 1163-1184, 1185-1200, 1201-1221, 1223-1244, 1245-1266, 1267-1282, 1283-1304, 1305-1326, 1327-1348, 1349-1364, 1365-1386, and 1387-1397. An 8 X 78 AA approximate tandem repeats region spans residues 203-825; that stretch reads TTTTTVGYPG…IPTGTTGTTT (623 aa). Residues N224, N263, N302, N341, N380, N419, N458, N497, N536, N575, N614, and N653 are each glycosylated (N-linked (GlcNAc...) asparagine). The N-linked (GlcNAc...) asparagine glycan is linked to N784. The tract at residues 826-1140 is 8 X 44 AA approximate tandem repeats; it reads VVIQTPTTVT…TTTVVINTPT (315 aa). The tract at residues 1135 to 1393 is disordered; the sequence is VINTPTTTGS…TQVTTATEVQ (259 aa). Positions 1141 to 1397 are 13 X 22 AA approximate tandem repeats; the sequence is TTGSEVLPTT…TATEVQPTTA (257 aa). N-linked (GlcNAc...) asparagine glycans are attached at residues N1510, N1516, N1529, and N1532. S1539 is lipidated: GPI-anchor amidated serine. The propeptide at 1540-1563 is removed in mature form; the sequence is SAGANKPIAYLTFVSLFVYIVTLI.

This sequence belongs to the mam3/map4 family.

It localises to the cell membrane. In terms of biological role, galactose-specific adhesion protein essential for non-sexual flocculation and filamentous growth. Required for adhesion and filamentous growth through recognition of galactose residues on cell surface glycoconjugates. Induces flocculation when overexpressed. The polypeptide is Galactose-specific cell agglutination protein gsf2 (Schizosaccharomyces pombe (strain 972 / ATCC 24843) (Fission yeast)).